Consider the following 169-residue polypeptide: Allophycocyanin subunit beta-18 (169 aa).

Position 72 is an N4-methylasparagine (Asn-72). A (2R,3E)-phycocyanobilin-binding site is contributed by Cys-82.

The protein belongs to the phycobiliprotein family. In terms of assembly, heterodimer of an alpha and a beta chain. Post-translationally, contains one covalently linked bilin chromophore.

Its subcellular location is the plastid. It is found in the chloroplast thylakoid membrane. In terms of biological role, light-harvesting photosynthetic bile pigment-protein from the phycobiliprotein complex. Allophycocyanin has a maximum absorption at approximately 650 nanometers. The protein is Allophycocyanin subunit beta-18 (apcF) of Porphyra purpurea (Red seaweed).